The primary structure comprises 158 residues: MDEEAAKPRDSTVNQQHQYYYGTFQGVANFPTPTPPPQFMQPQHPITTFPGHAYQNLQGHGGGVNYAQGFPVVVPDYTVVEVRPMIEHELPCCGLGMGWFLFIMGFLFGGIPWYLGAFIVLVTSVDHREKAGYVACSIASVVYLIAVMLGMTGDINIW.

It belongs to the eukaryotic ribosomal protein eL20 family.

This is Large ribosomal subunit protein eL20z (RPL18A1) from Arabidopsis thaliana (Mouse-ear cress).